Reading from the N-terminus, the 370-residue chain is uncharacterized protein (370 aa).

The residue at position 207 (lysine 207) is an N6-(pyridoxal phosphate)lysine.

It belongs to the class-V pyridoxal-phosphate-dependent aminotransferase family. Pyridoxal 5'-phosphate is required as a cofactor.

This is an uncharacterized protein from Bacillus subtilis (strain 168).